The following is a 275-amino-acid chain: MASLQTQMISFYLIFLSILLTTIFFFKVNSTETTSFSITKFSPDQQNLIFQGDGYTTKGKLTLTKAVKSTVGRALYSTPIHIWDRDTGSVANFVTSFTFVIDAPSSYNVADGFTFFIAPVDTKPQTGGGYLGVFNSKEYDKTSQTVAVEFDTFYNAAWDPSNKERHIGIDVNSIKSVNTKSWNLQNGERANVVIAFNAATNVLTVTLTYPNSLEEENVTSYTLNEVVPLKDVVPEWVRIGFSATTGAEFAAHEVHSWSFHSELGGTSSSKQAADA.

The signal sequence occupies residues 1–30 (MASLQTQMISFYLIFLSILLTTIFFFKVNS). D-glucose contacts are provided by aspartate 111 and glycine 129. 2 residues coordinate Mn(2+): glutamate 149 and aspartate 151. 4 residues coordinate Ca(2+): aspartate 151, phenylalanine 153, asparagine 155, and aspartate 159. Aspartate 159 and histidine 166 together coordinate Mn(2+). Positions 211 to 217 (NSLEEEN) are excised as a propeptide. Residues glycine 246 and alanine 247 each contribute to the D-glucose site. A propeptide spanning residues 270–275 (KQAADA) is cleaved from the precursor.

The protein belongs to the leguminous lectin family. Heterotetramer of two alpha and two beta chains. In terms of processing, the mature form consists of two chains, alpha and beta, produced by cleavage of the immature protein. These remain cleaved, yet fold together to form one subunit.

In terms of biological role, D-mannose specific lectin. The polypeptide is Lectin (Lens culinaris subsp. tomentosus (Lentil)).